We begin with the raw amino-acid sequence, 193 residues long: Penicillin-binding protein activator LpoB (193 aa).

The first 16 residues, 1 to 16 (MKKYLGVILAALVLTG), serve as a signal peptide directing secretion. The N-palmitoyl cysteine moiety is linked to residue cysteine 17. Cysteine 17 is lipidated: S-diacylglycerol cysteine. Positions 17 to 55 (CPSRPPEPTEPPATIEPVEPQVPTTPTLPPGESVPQPPK) are disordered. The span at 28 to 41 (PATIEPVEPQVPTT) shows a compositional bias: low complexity.

The protein belongs to the LpoB family. As to quaternary structure, interacts with PBP1b.

It localises to the cell outer membrane. Functionally, regulator of peptidoglycan synthesis that is essential for the function of penicillin-binding protein 1B (PBP1b). The protein is Penicillin-binding protein activator LpoB of Pectobacterium carotovorum subsp. carotovorum (strain PC1).